The following is a 650-amino-acid chain: Probable protein phosphatase 2C 36 (650 aa).

Positions 146–166 (SGKKTKEKAKLKKSGSKSFTK) are disordered. Basic residues predominate over residues 148-166 (KKTKEKAKLKKSGSKSFTK). Residues 239-641 (ESALEEPKIQ…DDVSVIVISL (403 aa)) form the PPM-type phosphatase domain. The Mn(2+) site is built by Asp-276, Gly-277, Asp-569, and Asp-632.

Belongs to the PP2C family. It depends on Mg(2+) as a cofactor. Mn(2+) is required as a cofactor.

The protein resides in the nucleus. The enzyme catalyses O-phospho-L-seryl-[protein] + H2O = L-seryl-[protein] + phosphate. The catalysed reaction is O-phospho-L-threonyl-[protein] + H2O = L-threonyl-[protein] + phosphate. This chain is Probable protein phosphatase 2C 36 (PLL3), found in Arabidopsis thaliana (Mouse-ear cress).